A 276-amino-acid chain; its full sequence is MHKIFSKNNLIFFVFVAFIFVVIVLQFFVSSENATKVNLSQTFEPISWLHLLGTDDYGRDLFTRIIIGARSTLFVTVLTLIAIVVIGVTLGLFAGYKKGWIERLVLRFIDVGLSIPEFIIMIALASFFQPSLWNLVISITLIKWMNYTRLTRSIVNSEMNKPYIKMAQLFHVPTRTILIRHLTPKIIPAIIVLMVVDFGKIILYISSLSFIGLGAQPPTPEWGAMLQQGRDFISSHPIMLIAPASVIAITILIFNLTGDALRDRLLKQRGEYDESH.

The next 5 helical transmembrane spans lie at 10–30, 73–93, 108–128, 186–206, and 238–258; these read LIFF…FFVS, LFVT…LGLF, FIDV…ASFF, IIPA…LYIS, and IMLI…NLTG. Residues 69 to 258 form the ABC transmembrane type-1 domain; the sequence is ARSTLFVTVL…ITILIFNLTG (190 aa).

The protein belongs to the binding-protein-dependent transport system permease family. OppBC subfamily. In terms of assembly, the complex is composed of two ATP-binding proteins (NikD and NikE), two transmembrane proteins (NikB and NikC) and a solute-binding protein (NikA).

The protein localises to the cell membrane. Its function is as follows. Part of the ABC transporter complex NikABCDE (Opp2) involved in nickel import. Probably responsible for the translocation of the substrate across the membrane. In Staphylococcus aureus (strain USA300), this protein is Nickel import system permease protein NikC.